The sequence spans 425 residues: Glutamate-1-semialdehyde 2,1-aminomutase (425 aa).

Lys-265 carries the post-translational modification N6-(pyridoxal phosphate)lysine.

Belongs to the class-III pyridoxal-phosphate-dependent aminotransferase family. HemL subfamily. In terms of assembly, homodimer. Pyridoxal 5'-phosphate is required as a cofactor.

The protein localises to the cytoplasm. It catalyses the reaction (S)-4-amino-5-oxopentanoate = 5-aminolevulinate. Its pathway is porphyrin-containing compound metabolism; protoporphyrin-IX biosynthesis; 5-aminolevulinate from L-glutamyl-tRNA(Glu): step 2/2. This chain is Glutamate-1-semialdehyde 2,1-aminomutase, found in Desulfatibacillum aliphaticivorans.